Here is a 198-residue protein sequence, read N- to C-terminus: Recombination protein RecR (198 aa).

The C4-type zinc finger occupies 57–72; the sequence is CSVCGRLTDDDPCIIC. Residues 80–175 form the Toprim domain; sequence TKILVVEDSK…KVTRLARGLA (96 aa).

Belongs to the RecR family.

Functionally, may play a role in DNA repair. It seems to be involved in an RecBC-independent recombinational process of DNA repair. It may act with RecF and RecO. The protein is Recombination protein RecR of Streptococcus thermophilus (strain CNRZ 1066).